Consider the following 227-residue polypeptide: MAHPVQLGLQDATSPVMEELITFHDYALMTISLISFLVLYALFSTLTTKLTNTNITDAQEMETTWTILPAVILILIALPSLRILYLTDEINNPSFTIKSIGHQWYWTYEYTDYGGLIFNSYMLPPLFLNPGDLRLLEVDNRVVLPIEAPVRMMITSQDVLHSWTIPTLGLKTDAVPGRLNQTTFTATRPGVYYGQCSEICGANHSFMPIVAELIPLKIFEMGPVFTL.

At 1–14 the chain is on the mitochondrial intermembrane side; that stretch reads MAHPVQLGLQDATS. A helical transmembrane segment spans residues 15 to 45; that stretch reads PVMEELITFHDYALMTISLISFLVLYALFST. Residues 46-59 are Mitochondrial matrix-facing; sequence LTTKLTNTNITDAQ. The chain crosses the membrane as a helical span at residues 60-87; the sequence is EMETTWTILPAVILILIALPSLRILYLT. Topologically, residues 88–227 are mitochondrial intermembrane; the sequence is DEINNPSFTI…IFEMGPVFTL (140 aa). Cu cation-binding residues include H161, C196, E198, C200, H204, and M207. E198 provides a ligand contact to Mg(2+).

The protein belongs to the cytochrome c oxidase subunit 2 family. As to quaternary structure, component of the cytochrome c oxidase (complex IV, CIV), a multisubunit enzyme composed of 14 subunits. The complex is composed of a catalytic core of 3 subunits MT-CO1, MT-CO2 and MT-CO3, encoded in the mitochondrial DNA, and 11 supernumerary subunits COX4I, COX5A, COX5B, COX6A, COX6B, COX6C, COX7A, COX7B, COX7C, COX8 and NDUFA4, which are encoded in the nuclear genome. The complex exists as a monomer or a dimer and forms supercomplexes (SCs) in the inner mitochondrial membrane with NADH-ubiquinone oxidoreductase (complex I, CI) and ubiquinol-cytochrome c oxidoreductase (cytochrome b-c1 complex, complex III, CIII), resulting in different assemblies (supercomplex SCI(1)III(2)IV(1) and megacomplex MCI(2)III(2)IV(2)). Found in a complex with TMEM177, COA6, COX18, COX20, SCO1 and SCO2. Interacts with TMEM177 in a COX20-dependent manner. Interacts with COX20. Interacts with COX16. Requires Cu cation as cofactor.

The protein localises to the mitochondrion inner membrane. It catalyses the reaction 4 Fe(II)-[cytochrome c] + O2 + 8 H(+)(in) = 4 Fe(III)-[cytochrome c] + 2 H2O + 4 H(+)(out). Its function is as follows. Component of the cytochrome c oxidase, the last enzyme in the mitochondrial electron transport chain which drives oxidative phosphorylation. The respiratory chain contains 3 multisubunit complexes succinate dehydrogenase (complex II, CII), ubiquinol-cytochrome c oxidoreductase (cytochrome b-c1 complex, complex III, CIII) and cytochrome c oxidase (complex IV, CIV), that cooperate to transfer electrons derived from NADH and succinate to molecular oxygen, creating an electrochemical gradient over the inner membrane that drives transmembrane transport and the ATP synthase. Cytochrome c oxidase is the component of the respiratory chain that catalyzes the reduction of oxygen to water. Electrons originating from reduced cytochrome c in the intermembrane space (IMS) are transferred via the dinuclear copper A center (CU(A)) of subunit 2 and heme A of subunit 1 to the active site in subunit 1, a binuclear center (BNC) formed by heme A3 and copper B (CU(B)). The BNC reduces molecular oxygen to 2 water molecules using 4 electrons from cytochrome c in the IMS and 4 protons from the mitochondrial matrix. This is Cytochrome c oxidase subunit 2 (MT-CO2) from Chlorocebus aethiops (Green monkey).